The primary structure comprises 878 residues: Alanine--tRNA ligase (878 aa).

Zn(2+) is bound by residues His565, His569, Cys667, and His671.

Belongs to the class-II aminoacyl-tRNA synthetase family. It depends on Zn(2+) as a cofactor.

Its subcellular location is the cytoplasm. It catalyses the reaction tRNA(Ala) + L-alanine + ATP = L-alanyl-tRNA(Ala) + AMP + diphosphate. Its function is as follows. Catalyzes the attachment of alanine to tRNA(Ala) in a two-step reaction: alanine is first activated by ATP to form Ala-AMP and then transferred to the acceptor end of tRNA(Ala). Also edits incorrectly charged Ser-tRNA(Ala) and Gly-tRNA(Ala) via its editing domain. The chain is Alanine--tRNA ligase from Desulforamulus reducens (strain ATCC BAA-1160 / DSM 100696 / MI-1) (Desulfotomaculum reducens).